A 149-amino-acid chain; its full sequence is Large ribosomal subunit protein bL9 (149 aa).

Belongs to the bacterial ribosomal protein bL9 family.

In terms of biological role, binds to the 23S rRNA. This is Large ribosomal subunit protein bL9 from Bacillus licheniformis (strain ATCC 14580 / DSM 13 / JCM 2505 / CCUG 7422 / NBRC 12200 / NCIMB 9375 / NCTC 10341 / NRRL NRS-1264 / Gibson 46).